Here is a 197-residue protein sequence, read N- to C-terminus: MAVVPIRIVGDPVLHTPTSPVPVGADGSLPADLPELIATMYETMDAAHGVGLAANQIGYGLRLFVYDCADDRGKAAHRRGVVINPVLETSEIPENMPDPDNDDEGCLSVPGESFPTGRATWARVTGLDAEGNPVELEGSGLFARMLQHETGHLDGYLYLDCLIGRHARSAKRAVKSHGWGVPGLSWLPGEGPDPFGH.

Residues Cys106 and His148 each contribute to the Fe cation site. Glu149 is a catalytic residue. A Fe cation-binding site is contributed by His152.

The protein belongs to the polypeptide deformylase family. Requires Fe(2+) as cofactor.

It catalyses the reaction N-terminal N-formyl-L-methionyl-[peptide] + H2O = N-terminal L-methionyl-[peptide] + formate. In terms of biological role, removes the formyl group from the N-terminal Met of newly synthesized proteins. Requires at least a dipeptide for an efficient rate of reaction. N-terminal L-methionine is a prerequisite for activity but the enzyme has broad specificity at other positions. This is Peptide deformylase from Mycobacterium marinum (strain ATCC BAA-535 / M).